The primary structure comprises 111 residues: T cell receptor beta variable 30 (111 aa).

The signal sequence occupies residues 1-18; it reads MLCSLLALLLGTFFGVRS. An Ig-like domain is found at 19-111; it reads QTIHQWPATL…DSGFYLCAWS (93 aa). A disulfide bridge connects residues Cys40 and Cys108. N-linked (GlcNAc...) asparagine glycosylation occurs at Asn80.

Alpha-beta TR is a heterodimer composed of an alpha and beta chain; disulfide-linked. The alpha-beta TR is associated with the transmembrane signaling CD3 coreceptor proteins to form the TR-CD3 (TcR or TCR). The assembly of alpha-beta TR heterodimers with CD3 occurs in the endoplasmic reticulum where a single alpha-beta TR heterodimer associates with one CD3D-CD3E heterodimer, one CD3G-CD3E heterodimer and one CD247 homodimer forming a stable octameric structure. CD3D-CD3E and CD3G-CD3E heterodimers preferentially associate with TR alpha and TR beta chains, respectively. The association of the CD247 homodimer is the last step of TcR assembly in the endoplasmic reticulum and is required for transport to the cell surface.

The protein localises to the cell membrane. V region of the variable domain of T cell receptor (TR) beta chain that participates in the antigen recognition. Alpha-beta T cell receptors are antigen specific receptors which are essential to the immune response and are present on the cell surface of T lymphocytes. Recognize peptide-major histocompatibility (MH) (pMH) complexes that are displayed by antigen presenting cells (APC), a prerequisite for efficient T cell adaptive immunity against pathogens. Binding of alpha-beta TR to pMH complex initiates TR-CD3 clustering on the cell surface and intracellular activation of LCK that phosphorylates the ITAM motifs of CD3G, CD3D, CD3E and CD247 enabling the recruitment of ZAP70. In turn ZAP70 phosphorylates LAT, which recruits numerous signaling molecules to form the LAT signalosome. The LAT signalosome propagates signal branching to three major signaling pathways, the calcium, the mitogen-activated protein kinase (MAPK) kinase and the nuclear factor NF-kappa-B (NF-kB) pathways, leading to the mobilization of transcription factors that are critical for gene expression and essential for T cell growth and differentiation. The T cell repertoire is generated in the thymus, by V-(D)-J rearrangement. This repertoire is then shaped by intrathymic selection events to generate a peripheral T cell pool of self-MH restricted, non-autoaggressive T cells. Post-thymic interaction of alpha-beta TR with the pMH complexes shapes TR structural and functional avidity. The protein is T cell receptor beta variable 30 of Homo sapiens (Human).